A 395-amino-acid polypeptide reads, in one-letter code: MAQLETRTEPMVVNFGPHHPSMHGVLRLVVTLDGENVIDCEPVIGYLHRGMEKIAENRTNVMYVPYVSRMDYAAGMFYEAIVVNAPERLANIPVPKRASYIRVLMLELNRIANHLLWLGPFLADVGAQTPFFYIFREREMIYDLWEAATGQRLINNNFFRIGGVACDLPYGWLEKCIDFCDWFGPKIDEYEKLITNNPIFRKRIEGLGTIERDQAINWSLSGPMLRASGVSWDLRKVDSYECYDDFDWQIASEKEGDCYARYRVRVEEMRQSLSIIRQACKMIPGGPTENLEAQRMATEDKKSEIFGIDYQYVAKKVAPTFKIPNGELYTRLESGKGEIGVFIQGNNEVTPWRFKIRAADLNNLQILPHILKGAKIADIMAILGSIDVIMGSVDR.

This sequence belongs to the complex I 49 kDa subunit family. In terms of assembly, NDH-1 can be composed of about 15 different subunits; different subcomplexes with different compositions have been identified which probably have different functions.

The protein localises to the cellular thylakoid membrane. It carries out the reaction a plastoquinone + NADH + (n+1) H(+)(in) = a plastoquinol + NAD(+) + n H(+)(out). The catalysed reaction is a plastoquinone + NADPH + (n+1) H(+)(in) = a plastoquinol + NADP(+) + n H(+)(out). In terms of biological role, NDH-1 shuttles electrons from an unknown electron donor, via FMN and iron-sulfur (Fe-S) centers, to quinones in the respiratory and/or the photosynthetic chain. The immediate electron acceptor for the enzyme in this species is believed to be plastoquinone. Couples the redox reaction to proton translocation, and thus conserves the redox energy in a proton gradient. Cyanobacterial NDH-1 also plays a role in inorganic carbon-concentration. This chain is NAD(P)H-quinone oxidoreductase subunit H, found in Prochlorococcus marinus (strain MIT 9312).